Consider the following 107-residue polypeptide: Nucleoid-associated protein BLi00029/BL02358 (107 aa).

The segment at Met-1–Glu-27 is disordered. Low complexity predominate over residues Met-8 to Lys-17. A compositionally biased stretch (basic and acidic residues) spans Met-18–Glu-27.

The protein belongs to the YbaB/EbfC family. In terms of assembly, homodimer.

It is found in the cytoplasm. Its subcellular location is the nucleoid. Binds to DNA and alters its conformation. May be involved in regulation of gene expression, nucleoid organization and DNA protection. In Bacillus licheniformis (strain ATCC 14580 / DSM 13 / JCM 2505 / CCUG 7422 / NBRC 12200 / NCIMB 9375 / NCTC 10341 / NRRL NRS-1264 / Gibson 46), this protein is Nucleoid-associated protein BLi00029/BL02358.